A 699-amino-acid chain; its full sequence is MPFYKQPWVFSKVFVLAMAKPPSFGCCFFLLFFSFLSSSFVSFALTDTEAAFIVQRQLLTLPDNGELPDDIEYEVDLKATFANTRLKRAYIALQAWKKAIFSDPFNTTGNWHGPHVCGYTGVVCAPALDDSDVTVVAGVDLNGADIAGHLPAELGLMTDVAMFHLNSNRFCGIIPKSFEKLKLMHEFDVSNNRFVGPFPNVVLSWPDVKYFDLRFNDFEGQVPPELFKKELDAIFLNDNRFTSVIPESLGESPASVVTFANNKFTGCIPKSIGNMKNLNEIVFMDNDLGGCFPSEIGKLSNVTVFDASKNSFIGRLPTSFVGLTSVEEIDISGNKLTGLVPHNICQLPNLVNLTYSYNYFSGQGGSCVPGGSRKEIALDDTRNCLASRPEQRSAQECAVVINRPVDCSKDKCAGGSSTPSKPSPVHKPTPVPTTPVHKPTPVPTTPVQKPSPVPTTPVQKPSPVPTTPVHEPSPVLATPVDKPSPVPSRPVQKPQPPKESPQPDDPYDQSPVTKRRSPPPAPVNSPPPPVYSPPPPPPPVHSPPPPVHSPPPPPVYSPPPPPPPVHSPPPPVFSPPPPVYSPPPPVHSPPPPVHSPPPPAPVHSPPPPVHSPPPPPPVYSPPPPVFSPPPSQSPPVVYSPPPRPPKINSPPVQSPPPAPVEKKETPPAHAPAPSDDEFIIPPFIGHQYASPPPPMFAGY.

The N-terminal stretch at Met1–Ser39 is a signal peptide. Asn106 is a glycosylation site (N-linked (GlcNAc...) asparagine). LRR repeat units lie at residues Val133–Met157, Thr158–Lys180, Lys182–Trp205, Pro206–Lys229, Leu231–Glu251, Pro253–Met275, Lys276–Leu299, Asn301–Leu323, and Thr324–Leu347. Residue Asn301 is glycosylated (N-linked (GlcNAc...) asparagine). A glycan (N-linked (GlcNAc...) asparagine) is linked at Asn352. Positions Lys411–Tyr699 are disordered. Composition is skewed to pro residues over residues Lys421–Thr466, Lys482–Asp504, Pro518–Pro659, and Ser690–Tyr699. The tract at residues Ser517–Tyr699 is contains the Ser-Pro(4) repeats.

In terms of processing, hydroxylated on proline residues in the S-P-P-P-P repeat. O-glycosylated on hydroxyprolines. In terms of tissue distribution, expressed in flowers, stamen, pollen, and pollinated carpels.

It localises to the secreted. It is found in the cell wall. Modulates cell morphogenesis by regulating cell wall formation and assembly, and/or growth polarization. This is Pollen-specific leucine-rich repeat extensin-like protein 4 (PEX4) from Arabidopsis thaliana (Mouse-ear cress).